A 29-amino-acid polypeptide reads, in one-letter code: Dander allergen Equ c 2.0101 (29 aa).

It belongs to the calycin superfamily. Lipocalin family.

It is found in the secreted. The protein is Dander allergen Equ c 2.0101 of Equus caballus (Horse).